The primary structure comprises 474 residues: B-cell CLL/lymphoma 6 member B protein (474 aa).

Residues 38 to 105 (TDVTLLVGGQ…MYTSRLRLSP (68 aa)) form the BTB domain. 2 disordered regions span residues 144-190 (PVEV…PDPK) and 210-249 (GSLVGESSGQPCPQARLPSGDEACSSSSSSEEGTTPGLQS). Residues 150–160 (PRPPTVAPPGS) show a composition bias toward pro residues. A compositionally biased stretch (basic and acidic residues) spans 162 to 172 (RRSEGHPDPPT). Polar residues-rich tracts occupy residues 173-183 (ESRSCSQGSPS), 210-220 (GSLVGESSGQP), and 240-249 (EEGTTPGLQS). 5 consecutive C2H2-type zinc fingers follow at residues 323–345 (YKCQLCRSAFRYKGNLASHRTVH), 351–373 (YRCSICGARFNRPANLKTHSRIH), 379–401 (YKCETCGSRFVQVAHLRAHVLIH), 407–429 (YPCPTCGTRFRHLQTLKSHVRIH), and 435–458 (YHCDPCGLHFRHKSQLRLHLRQKH).

As to quaternary structure, associates with BCL6 through the BTB domain. In terms of tissue distribution, ubiquitously expressed with higher expression found in heart and lung.

The protein resides in the nucleus. In terms of biological role, acts as a sequence-specific transcriptional repressor in association with BCL6. Necessary for activation of naive T-cells to antigenic stimulation. May attenuate the regulatory effect of BCL6 on antigenic activation of naive CD4 T-cells by forming a heterodimer with BCL6. This chain is B-cell CLL/lymphoma 6 member B protein (Bcl6b), found in Mus musculus (Mouse).